A 389-amino-acid chain; its full sequence is Chalcone synthase 1 (389 aa).

The active site involves Cys164.

It belongs to the thiolase-like superfamily. Chalcone/stilbene synthases family.

The catalysed reaction is (E)-4-coumaroyl-CoA + 3 malonyl-CoA + 3 H(+) = 2',4,4',6'-tetrahydroxychalcone + 3 CO2 + 4 CoA. It functions in the pathway secondary metabolite biosynthesis; flavonoid biosynthesis. Functionally, the primary product of this enzyme is 4,2',4',6'-tetrahydroxychalcone (also termed naringenin-chalcone or chalcone) which can under specific conditions spontaneously isomerize into naringenin. In Daucus carota (Wild carrot), this protein is Chalcone synthase 1 (CHS1).